The chain runs to 403 residues: MKVLVINSGSSSIKYQLIEMDGEKVLCKGIAERIGIEGSRLVHRVNDEKYVIERELPDHEEALKLILNTLVDEKLGVIKDLKEIDAVGHRVVHGGERFKESVLVDEEVLKAIEEVSPLAPLHNPANLMGIKAAMKLLPGVPNVVVFDTAFHQTIPQKAYLYAIPYEYYEKHRIRRYGFHGTSHRYVSKRAAEILGKKLEELKIITCHIGNGASVAAVKYGKCVDTSMGFTPLEGLVMGTRSGDLDPAIPFFIMEKEGISPQEMYDILNKKSGVYGLSKGFSSDMRDIEEAALKGDEWCKLILDIYHYRIAKYIGAYAAAMNGVDAIVFTAGVGENSPITREDVCSYLEFLGVKLDKQKNEETIRGKEGIISTLDSRVKVLVVPTNEELMIARDTKEIVEKIGR.

Residue asparagine 7 coordinates Mg(2+). Lysine 14 serves as a coordination point for ATP. Arginine 90 is a substrate binding site. The active-site Proton donor/acceptor is aspartate 147. Residues 207–211, 283–285, and 331–335 contribute to the ATP site; these read HIGNG, DMR, and GVGEN. Residue glutamate 386 coordinates Mg(2+).

Belongs to the acetokinase family. As to quaternary structure, homodimer. It depends on Mg(2+) as a cofactor. Mn(2+) is required as a cofactor.

It is found in the cytoplasm. The catalysed reaction is acetate + ATP = acetyl phosphate + ADP. The protein operates within metabolic intermediate biosynthesis; acetyl-CoA biosynthesis; acetyl-CoA from acetate: step 1/2. Its function is as follows. Catalyzes the formation of acetyl phosphate from acetate and ATP. Can also catalyze the reverse reaction. This chain is Acetate kinase, found in Thermotoga petrophila (strain ATCC BAA-488 / DSM 13995 / JCM 10881 / RKU-1).